We begin with the raw amino-acid sequence, 120 residues long: uncharacterized protein (120 aa).

This is an uncharacterized protein from Allochromatium vinosum (strain ATCC 17899 / DSM 180 / NBRC 103801 / NCIMB 10441 / D) (Chromatium vinosum).